The chain runs to 435 residues: Divergent protein kinase domain 2B (435 aa).

Positions methionine 1–serine 33 are cleaved as a signal peptide. 2 N-linked (GlcNAc...) asparagine glycosylation sites follow: asparagine 102 and asparagine 395.

It belongs to the DIPK family.

Its subcellular location is the secreted. The polypeptide is Divergent protein kinase domain 2B (Dipk2b) (Mus musculus (Mouse)).